Consider the following 176-residue polypeptide: NAD(P)H-quinone oxidoreductase subunit 6, chloroplastic (176 aa).

5 consecutive transmembrane segments (helical) span residues 10-30 (FLLV…VLLP), 32-52 (PIFS…LYIL), 61-81 (AQLL…VMFM), 92-112 (LWTI…FLLM), and 152-172 (FFLP…GAIS).

The protein belongs to the complex I subunit 6 family. NDH is composed of at least 16 different subunits, 5 of which are encoded in the nucleus.

The protein localises to the plastid. The protein resides in the chloroplast thylakoid membrane. The catalysed reaction is a plastoquinone + NADH + (n+1) H(+)(in) = a plastoquinol + NAD(+) + n H(+)(out). The enzyme catalyses a plastoquinone + NADPH + (n+1) H(+)(in) = a plastoquinol + NADP(+) + n H(+)(out). NDH shuttles electrons from NAD(P)H:plastoquinone, via FMN and iron-sulfur (Fe-S) centers, to quinones in the photosynthetic chain and possibly in a chloroplast respiratory chain. The immediate electron acceptor for the enzyme in this species is believed to be plastoquinone. Couples the redox reaction to proton translocation, and thus conserves the redox energy in a proton gradient. The polypeptide is NAD(P)H-quinone oxidoreductase subunit 6, chloroplastic (ndhG) (Arabidopsis thaliana (Mouse-ear cress)).